Reading from the N-terminus, the 127-residue chain is Aspartate 1-decarboxylase (127 aa).

Ser-25 (schiff-base intermediate with substrate; via pyruvic acid) is an active-site residue. At Ser-25 the chain carries Pyruvic acid (Ser). Thr-57 is a binding site for substrate. Tyr-58 functions as the Proton donor in the catalytic mechanism. Residue 73-75 (GSA) participates in substrate binding.

Belongs to the PanD family. In terms of assembly, heterooctamer of four alpha and four beta subunits. Pyruvate is required as a cofactor. In terms of processing, is synthesized initially as an inactive proenzyme, which is activated by self-cleavage at a specific serine bond to produce a beta-subunit with a hydroxyl group at its C-terminus and an alpha-subunit with a pyruvoyl group at its N-terminus.

Its subcellular location is the cytoplasm. It catalyses the reaction L-aspartate + H(+) = beta-alanine + CO2. Its pathway is cofactor biosynthesis; (R)-pantothenate biosynthesis; beta-alanine from L-aspartate: step 1/1. Functionally, catalyzes the pyruvoyl-dependent decarboxylation of aspartate to produce beta-alanine. This Polaromonas naphthalenivorans (strain CJ2) protein is Aspartate 1-decarboxylase.